Consider the following 191-residue polypeptide: Ribosomal RNA small subunit methyltransferase G (191 aa).

S-adenosyl-L-methionine is bound by residues glycine 59, 111–112 (IE), and arginine 124.

The protein belongs to the methyltransferase superfamily. RNA methyltransferase RsmG family.

It is found in the cytoplasm. Functionally, specifically methylates the N7 position of a guanine in 16S rRNA. In Mycoplasma pneumoniae (strain ATCC 29342 / M129 / Subtype 1) (Mycoplasmoides pneumoniae), this protein is Ribosomal RNA small subunit methyltransferase G.